Here is a 139-residue protein sequence, read N- to C-terminus: Large ribosomal subunit protein uL22c (139 aa).

Belongs to the universal ribosomal protein uL22 family. Part of the 50S ribosomal subunit.

The protein resides in the plastid. It localises to the chloroplast. Its function is as follows. This protein binds specifically to 23S rRNA. In terms of biological role, the globular domain of the protein is located near the polypeptide exit tunnel on the outside of the subunit, while an extended beta-hairpin is found that lines the wall of the exit tunnel in the center of the 70S ribosome. This Cycas taitungensis (Prince sago) protein is Large ribosomal subunit protein uL22c (rpl22).